Reading from the N-terminus, the 147-residue chain is TRAF-interacting protein with FHA domain-containing protein B (147 aa).

The 73-residue stretch at 36-108 (LLVGRGQNTH…LGTINRISFS (73 aa)) folds into the FHA domain.

Interacts with TIFA. Expressed at high levels in spleen and at moderate levels in lung, thymus, and small intestine.

In terms of biological role, inhibits TIFA-mediated TRAF6 activation possibly by inducing a conformational change in TIFA. This is TRAF-interacting protein with FHA domain-containing protein B from Mus musculus (Mouse).